An 855-amino-acid chain; its full sequence is Glucans biosynthesis glucosyltransferase H (855 aa).

The next 6 membrane-spanning stretches (helical) occupy residues Ile142 to Leu162, Ile196 to Met216, Val515 to Leu535, Leu572 to Trp592, Thr606 to Phe626, and Phe682 to Ile702.

Belongs to the glycosyltransferase 2 family. OpgH subfamily.

It is found in the cell inner membrane. It functions in the pathway glycan metabolism; osmoregulated periplasmic glucan (OPG) biosynthesis. Involved in the biosynthesis of osmoregulated periplasmic glucans (OPGs). The chain is Glucans biosynthesis glucosyltransferase H from Pseudomonas entomophila (strain L48).